Here is a 344-residue protein sequence, read N- to C-terminus: Coproporphyrin III ferrochelatase (344 aa).

Ser-52 is a binding site for Fe-coproporphyrin III. Residue Cys-113 participates in [2Fe-2S] cluster binding. Residue Tyr-116 participates in Fe-coproporphyrin III binding. Fe(2+)-binding residues include His-172 and Glu-255. Residues Cys-316, Cys-325, and Cys-330 each coordinate [2Fe-2S] cluster.

This sequence belongs to the ferrochelatase family. It depends on [2Fe-2S] cluster as a cofactor.

The protein localises to the cytoplasm. The enzyme catalyses Fe-coproporphyrin III + 2 H(+) = coproporphyrin III + Fe(2+). The protein operates within porphyrin-containing compound metabolism; protoheme biosynthesis. In terms of biological role, involved in coproporphyrin-dependent heme b biosynthesis. Catalyzes the insertion of ferrous iron into coproporphyrin III to form Fe-coproporphyrin III. This is Coproporphyrin III ferrochelatase from Mycobacterium bovis (strain ATCC BAA-935 / AF2122/97).